The primary structure comprises 346 residues: 4-hydroxy-3-methylbut-2-enyl diphosphate reductase (346 aa).

[4Fe-4S] cluster is bound at residue Cys19. (2E)-4-hydroxy-3-methylbut-2-enyl diphosphate contacts are provided by His48 and His84. Dimethylallyl diphosphate is bound by residues His48 and His84. 2 residues coordinate isopentenyl diphosphate: His48 and His84. Cys106 contributes to the [4Fe-4S] cluster binding site. His134 contacts (2E)-4-hydroxy-3-methylbut-2-enyl diphosphate. Residue His134 coordinates dimethylallyl diphosphate. His134 contributes to the isopentenyl diphosphate binding site. Glu136 functions as the Proton donor in the catalytic mechanism. Residue Thr175 coordinates (2E)-4-hydroxy-3-methylbut-2-enyl diphosphate. A [4Fe-4S] cluster-binding site is contributed by Cys205. Residues Ser233, Ser234, Asn235, and Ser278 each contribute to the (2E)-4-hydroxy-3-methylbut-2-enyl diphosphate site. Residues Ser233, Ser234, Asn235, and Ser278 each contribute to the dimethylallyl diphosphate site. Residues Ser233, Ser234, Asn235, and Ser278 each contribute to the isopentenyl diphosphate site.

The protein belongs to the IspH family. Requires [4Fe-4S] cluster as cofactor.

The catalysed reaction is isopentenyl diphosphate + 2 oxidized [2Fe-2S]-[ferredoxin] + H2O = (2E)-4-hydroxy-3-methylbut-2-enyl diphosphate + 2 reduced [2Fe-2S]-[ferredoxin] + 2 H(+). The enzyme catalyses dimethylallyl diphosphate + 2 oxidized [2Fe-2S]-[ferredoxin] + H2O = (2E)-4-hydroxy-3-methylbut-2-enyl diphosphate + 2 reduced [2Fe-2S]-[ferredoxin] + 2 H(+). Its pathway is isoprenoid biosynthesis; dimethylallyl diphosphate biosynthesis; dimethylallyl diphosphate from (2E)-4-hydroxy-3-methylbutenyl diphosphate: step 1/1. It participates in isoprenoid biosynthesis; isopentenyl diphosphate biosynthesis via DXP pathway; isopentenyl diphosphate from 1-deoxy-D-xylulose 5-phosphate: step 6/6. Catalyzes the conversion of 1-hydroxy-2-methyl-2-(E)-butenyl 4-diphosphate (HMBPP) into a mixture of isopentenyl diphosphate (IPP) and dimethylallyl diphosphate (DMAPP). Acts in the terminal step of the DOXP/MEP pathway for isoprenoid precursor biosynthesis. The polypeptide is 4-hydroxy-3-methylbut-2-enyl diphosphate reductase (Brucella melitensis biotype 1 (strain ATCC 23456 / CCUG 17765 / NCTC 10094 / 16M)).